Here is a 641-residue protein sequence, read N- to C-terminus: Fructose-1,6-bisphosphatase class 3 (641 aa).

Belongs to the FBPase class 3 family. Requires Mn(2+) as cofactor.

The enzyme catalyses beta-D-fructose 1,6-bisphosphate + H2O = beta-D-fructose 6-phosphate + phosphate. It functions in the pathway carbohydrate biosynthesis; gluconeogenesis. This is Fructose-1,6-bisphosphatase class 3 from Bacillus velezensis (strain DSM 23117 / BGSC 10A6 / LMG 26770 / FZB42) (Bacillus amyloliquefaciens subsp. plantarum).